The primary structure comprises 372 residues: Ligninase LG3 (372 aa).

An N-terminal signal peptide occupies residues methionine 1–alanine 21. The propeptide occupies alanine 22–arginine 28. Cystine bridges form between cysteine 31–cysteine 43 and cysteine 62–cysteine 148. Histidine 75 serves as the catalytic Proton acceptor. Positions 76, 94, 96, and 98 each coordinate Ca(2+). Heme b is bound at residue histidine 204. Residues serine 205, aspartate 222, threonine 224, isoleucine 227, and aspartate 229 each contribute to the Ca(2+) site. An intrachain disulfide couples cysteine 277 to cysteine 345. An N-linked (GlcNAc...) asparagine glycan is attached at asparagine 285. A compositionally biased stretch (low complexity) spans phenylalanine 350–threonine 361. Residues phenylalanine 350–alanine 372 are disordered.

The protein belongs to the peroxidase family. Ligninase subfamily. The cofactor is heme b. Ca(2+) is required as a cofactor.

The enzyme catalyses 1-(3,4-dimethoxyphenyl)-2-(2-methoxyphenoxy)propane-1,3-diol + H2O2 = 3,4-dimethoxybenzaldehyde + guaiacol + glycolaldehyde + H2O. The catalysed reaction is 2 (3,4-dimethoxyphenyl)methanol + H2O2 = 2 (3,4-dimethoxyphenyl)methanol radical + 2 H2O. The protein operates within secondary metabolite metabolism; lignin degradation. Its function is as follows. Depolymerization of lignin. Catalyzes the C(alpha)-C(beta) cleavage of the propyl side chains of lignin. This Phanerodontia chrysosporium (White-rot fungus) protein is Ligninase LG3 (GLG3).